We begin with the raw amino-acid sequence, 92 residues long: DNA-directed RNA polymerase subunit omega (92 aa).

Belongs to the RNA polymerase subunit omega family. The RNAP catalytic core consists of 2 alpha, 1 beta, 1 beta' and 1 omega subunit. When a sigma factor is associated with the core the holoenzyme is formed, which can initiate transcription.

The enzyme catalyses RNA(n) + a ribonucleoside 5'-triphosphate = RNA(n+1) + diphosphate. Functionally, promotes RNA polymerase assembly. Latches the N- and C-terminal regions of the beta' subunit thereby facilitating its interaction with the beta and alpha subunits. In Shewanella frigidimarina (strain NCIMB 400), this protein is DNA-directed RNA polymerase subunit omega.